A 515-amino-acid chain; its full sequence is Elongation factor 1-alpha S (515 aa).

The 254-residue stretch at 5-258 (KTHINLVVIG…DAMKPPKRPT (254 aa)) folds into the tr-type G domain. The segment at 14–21 (GHVDAGKS) is G1. 14-21 (GHVDAGKS) lines the GTP pocket. The residue at position 55 (lysine 55) is an N6,N6-dimethyllysine. A G2 region spans residues 70-74 (GITID). N6,N6,N6-trimethyllysine is present on lysine 79. The G3 stretch occupies residues 91–94 (DAPG). Residues 91–95 (DAPGH) and 151–154 (NKMD) contribute to the GTP site. The G4 stretch occupies residues 151 to 154 (NKMD). Residues 187-206 (KKDKGDKKKGDKKEKKDKKD) are disordered. Positions 189–206 (DKGDKKKGDKKEKKDKKD) are enriched in basic and acidic residues. The segment at 222–224 (SGW) is G5. Lysine 289 carries the N6-methyllysine modification. Lysine 334 bears the N6,N6,N6-trimethyllysine mark. Residues 396–419 (KRGKQTHDVSDDTEWATKDDAEPR) are disordered. The segment covering 398 to 419 (GKQTHDVSDDTEWATKDDAEPR) has biased composition (basic and acidic residues). Residue lysine 441 is modified to N6,N6,N6-trimethyllysine.

This sequence belongs to the TRAFAC class translation factor GTPase superfamily. Classic translation factor GTPase family. EF-Tu/EF-1A subfamily.

Its subcellular location is the cytoplasm. Functionally, this protein promotes the GTP-dependent binding of aminoacyl-tRNA to the A-site of ribosomes during protein biosynthesis. This chain is Elongation factor 1-alpha S (TEF-S), found in Porphyra purpurea (Red seaweed).